Reading from the N-terminus, the 251-residue chain is Hydroxyacylglutathione hydrolase (251 aa).

Residues His53, His55, Asp57, His58, His110, Asp127, and His165 each coordinate Zn(2+).

This sequence belongs to the metallo-beta-lactamase superfamily. Glyoxalase II family. In terms of assembly, monomer. The cofactor is Zn(2+).

The enzyme catalyses an S-(2-hydroxyacyl)glutathione + H2O = a 2-hydroxy carboxylate + glutathione + H(+). The protein operates within secondary metabolite metabolism; methylglyoxal degradation; (R)-lactate from methylglyoxal: step 2/2. Functionally, thiolesterase that catalyzes the hydrolysis of S-D-lactoyl-glutathione to form glutathione and D-lactic acid. This is Hydroxyacylglutathione hydrolase from Yersinia pseudotuberculosis serotype IB (strain PB1/+).